A 98-amino-acid chain; its full sequence is Small ribosomal subunit protein uS19 (98 aa).

The interval 74–98 (FAPTRNYRGHAGGKSEKGGSAPRKK) is disordered.

The protein belongs to the universal ribosomal protein uS19 family.

Functionally, protein S19 forms a complex with S13 that binds strongly to the 16S ribosomal RNA. The protein is Small ribosomal subunit protein uS19 of Chlorobium chlorochromatii (strain CaD3).